The primary structure comprises 270 residues: Phosphonates import ATP-binding protein PhnC 1 (270 aa).

An ABC transporter domain is found at 2–245 (LVVEGLTCRF…IARELYDLEA (244 aa)). 34–41 (GRSGAGKS) serves as a coordination point for ATP.

The protein belongs to the ABC transporter superfamily. Phosphonates importer (TC 3.A.1.9.1) family. In terms of assembly, the complex is composed of two ATP-binding proteins (PhnC), two transmembrane proteins (PhnE) and a solute-binding protein (PhnD).

Its subcellular location is the cell inner membrane. It carries out the reaction phosphonate(out) + ATP + H2O = phosphonate(in) + ADP + phosphate + H(+). In terms of biological role, part of the ABC transporter complex PhnCDE involved in phosphonates import. Responsible for energy coupling to the transport system. This chain is Phosphonates import ATP-binding protein PhnC 1, found in Rhodopseudomonas palustris (strain ATCC BAA-98 / CGA009).